The sequence spans 483 residues: MITIETVLTILKNNANFREIIDGKHYQYKYSNPEVAFHHISYDSRDIKASTLFFVKGATFKKEFLEKAIESGLTFYVAEKDYQVGIPLILVNNIKNAMCLIAKEFYDNPQDKLKTLAFTGTKGKTTAAYFAYHILKQGYRPAMISTMNTTLDGKTFFKSKLTTPESLDLFKMMAQAVANGMTHLIMEVSSQAYLVGRVYGLTFDVGVFLNISPDHIGPIEHPTFEDYFYHKRLLLKHSRYVIVNSQMNHFALIKEQVADQPHDFYGKYSDNQIINSKAFSFDLTGKLAGHYDIQLTGSFNQENAVAAALACLQLGASQTDIQKGIVQTTVPGRMEVLIQKNGAKVFVDYAHNGDSLEKLLSVVEEHQKGTLILILGAPGNKGESRRADFGYVINAHPELQVILTADDPNNEDPQLISQEIAHHIKRPVNIIVDRKQAIQKAMSLTQSENDAVIIAGKGADAFQIIKGKRTAYAGDIEVARKYL.

Residue serine 44 coordinates UDP-N-acetyl-alpha-D-muramoyl-L-alanyl-D-glutamate. 120–126 (GTKGKTT) lines the ATP pocket. UDP-N-acetyl-alpha-D-muramoyl-L-alanyl-D-glutamate-binding positions include 162 to 163 (TT), serine 189, and arginine 197. Lysine 231 is subject to N6-carboxylysine. Residues 406-409 (DDPN) carry the L-lysine recognition motif motif.

It belongs to the MurCDEF family. MurE subfamily. Post-translationally, carboxylation is probably crucial for Mg(2+) binding and, consequently, for the gamma-phosphate positioning of ATP.

It is found in the cytoplasm. It catalyses the reaction UDP-N-acetyl-alpha-D-muramoyl-L-alanyl-D-glutamate + L-lysine + ATP = UDP-N-acetyl-alpha-D-muramoyl-L-alanyl-gamma-D-glutamyl-L-lysine + ADP + phosphate + H(+). It functions in the pathway cell wall biogenesis; peptidoglycan biosynthesis. Functionally, catalyzes the addition of L-lysine to the nucleotide precursor UDP-N-acetylmuramoyl-L-alanyl-D-glutamate (UMAG) in the biosynthesis of bacterial cell-wall peptidoglycan. The protein is UDP-N-acetylmuramoyl-L-alanyl-D-glutamate--L-lysine ligase of Streptococcus mutans serotype c (strain ATCC 700610 / UA159).